The primary structure comprises 442 residues: PCI domain-containing protein C1105.07c (442 aa).

The 192-residue stretch at 224 to 415 (VTFRYYLGRC…STLVLKKDPS (192 aa)) folds into the PCI domain.

The protein localises to the cytoplasm. It localises to the nucleus envelope. The chain is PCI domain-containing protein C1105.07c from Schizosaccharomyces pombe (strain 972 / ATCC 24843) (Fission yeast).